The sequence spans 106 residues: Large ribosomal subunit protein eL42 (106 aa).

Belongs to the eukaryotic ribosomal protein eL42 family.

The sequence is that of Large ribosomal subunit protein eL42 (RPL44) from Kluyveromyces lactis (strain ATCC 8585 / CBS 2359 / DSM 70799 / NBRC 1267 / NRRL Y-1140 / WM37) (Yeast).